The sequence spans 491 residues: Cobyric acid synthase (491 aa).

The GATase cobBQ-type domain maps to 258 to 445; that stretch reads ALKVAVPVLG…MHGLFGADAF (188 aa). C340 (nucleophile) is an active-site residue. H437 is a catalytic residue.

The protein belongs to the CobB/CobQ family. CobQ subfamily.

The protein operates within cofactor biosynthesis; adenosylcobalamin biosynthesis. Functionally, catalyzes amidations at positions B, D, E, and G on adenosylcobyrinic A,C-diamide. NH(2) groups are provided by glutamine, and one molecule of ATP is hydrogenolyzed for each amidation. This Mesorhizobium japonicum (strain LMG 29417 / CECT 9101 / MAFF 303099) (Mesorhizobium loti (strain MAFF 303099)) protein is Cobyric acid synthase.